A 305-amino-acid chain; its full sequence is MASNYRFAIFLTLFFATAGFSAAALVEEQPLVMKYHNGVLLKGNITVNLVWYGKFTPIQRSVIVDFIHSLNSKDVASSAAVPSVASWWKTTEKYKGGSSTLVVGKQLLLENYPLGKSLKNPYLRALSTKLNGGLRSITVVLTAKDVTVERFCMSRCGTHGSSGSNPRRAANGAAYVWVGNSETQCPGYCAWPFHQPIYGPQTPPLVAPNGDVGVDGMIINLATLLANTVTNPFNNGYYQGPPTAPLEAVSACPGIFGSGSYPGYAGRVLVDKTTGSSYNARGLAGRKYLLPAMWDPQSSTCKTLV.

An N-terminal signal peptide occupies residues 1 to 23 (MASNYRFAIFLTLFFATAGFSAA). The N-linked (GlcNAc...) asparagine glycan is linked to Asn-44.

This sequence belongs to the EXORDIUM family.

It is found in the secreted. Its subcellular location is the extracellular space. It localises to the apoplast. Its function is as follows. May play a role in a brassinosteroid-dependent regulation of growth and development. This chain is Protein EXORDIUM-like 2 (EXL2), found in Arabidopsis thaliana (Mouse-ear cress).